Consider the following 164-residue polypeptide: HTH-type transcriptional regulator IscR (164 aa).

Residues 2 to 131 form the HTH rrf2-type domain; that stretch reads RLTSKGRYAV…SSISLEELVN (130 aa). Positions 28 to 51 form a DNA-binding region, H-T-H motif; sequence LADISERQGISLSYLEQLFSRLRK. The [2Fe-2S] cluster site is built by cysteine 92, cysteine 98, and cysteine 104. The segment at 141–164 is disordered; the sequence is RQDNDKRRAPNGRAQETINVNLRP. Positions 154–164 are enriched in polar residues; the sequence is AQETINVNLRP.

[2Fe-2S] cluster is required as a cofactor.

Regulates the transcription of several operons and genes involved in the biogenesis of Fe-S clusters and Fe-S-containing proteins. The protein is HTH-type transcriptional regulator IscR of Photorhabdus laumondii subsp. laumondii (strain DSM 15139 / CIP 105565 / TT01) (Photorhabdus luminescens subsp. laumondii).